A 311-amino-acid chain; its full sequence is Porphobilinogen deaminase (311 aa).

The residue at position 245 (Cys245) is an S-(dipyrrolylmethanemethyl)cysteine.

It belongs to the HMBS family. Monomer. Requires dipyrromethane as cofactor.

It catalyses the reaction 4 porphobilinogen + H2O = hydroxymethylbilane + 4 NH4(+). Its pathway is porphyrin-containing compound metabolism; protoporphyrin-IX biosynthesis; coproporphyrinogen-III from 5-aminolevulinate: step 2/4. Its function is as follows. Tetrapolymerization of the monopyrrole PBG into the hydroxymethylbilane pre-uroporphyrinogen in several discrete steps. The protein is Porphobilinogen deaminase of Deinococcus deserti (strain DSM 17065 / CIP 109153 / LMG 22923 / VCD115).